We begin with the raw amino-acid sequence, 131 residues long: Small ribosomal subunit protein uS11 (131 aa).

The span at 1–15 (MAAKTVKKTRRRKER) shows a compositional bias: basic residues. Residues 1-23 (MAAKTVKKTRRRKERKNVEHGAA) are disordered.

The protein belongs to the universal ribosomal protein uS11 family. In terms of assembly, part of the 30S ribosomal subunit. Interacts with proteins S7 and S18. Binds to IF-3.

Functionally, located on the platform of the 30S subunit, it bridges several disparate RNA helices of the 16S rRNA. Forms part of the Shine-Dalgarno cleft in the 70S ribosome. The sequence is that of Small ribosomal subunit protein uS11 from Clostridium beijerinckii (strain ATCC 51743 / NCIMB 8052) (Clostridium acetobutylicum).